Reading from the N-terminus, the 123-residue chain is Large ribosomal subunit protein uL14c (123 aa).

Belongs to the universal ribosomal protein uL14 family. In terms of assembly, part of the 50S ribosomal subunit.

Its subcellular location is the plastid. The protein localises to the chloroplast. Its function is as follows. Binds to 23S rRNA. In Brachypodium distachyon (Purple false brome), this protein is Large ribosomal subunit protein uL14c.